The following is a 1018-amino-acid chain: Collagen, type I, alpha 1a (1018 aa).

Residues 1–10 (QMSAGYDDKS) are compositionally biased toward basic and acidic residues. The interval 1-991 (QMSAGYDDKS…SGEYWLDPDQ (991 aa)) is disordered. Positions 13–30 (MPVPGPMGPMGPRGPPGS) are enriched in pro residues. Over residues 31 to 58 (PGASGPQGFTGPPGEPGEAGPSGAMGPR) the composition is skewed to low complexity. Over residues 67 to 81 (NGEDGESGKPGRGGE) the composition is skewed to basic and acidic residues. Low complexity predominate over residues 126 to 136 (PRGNDGAAGAA). The segment covering 138 to 151 (PPGPTGPAGPPGFP) has biased composition (pro residues). Residues 152–170 (GGPGAKGDAGAQGGRGPEG) are compositionally biased toward gly residues. Low complexity-rich tracts occupy residues 171 to 214 (PAGA…AGAP) and 223 to 261 (SGPQ…APGV). The segment covering 284–296 (GARGGPGGRGFPG) has biased composition (gly residues). 4 stretches are compositionally biased toward low complexity: residues 370-385 (VGAR…PGPK), 424-442 (AGPA…PGFQ), 452-510 (LPGE…QGMP), and 543-558 (RGLT…AGAT). Positions 568–577 (GPVGPGGARG) are enriched in gly residues. Composition is skewed to low complexity over residues 591–627 (AGFA…AGPT) and 641–663 (PKGA…AGRV). Positions 665-677 (PPGPSGNPGPPGP) are enriched in pro residues. 2 stretches are compositionally biased toward low complexity: residues 701–746 (EVGA…XXPG) and 775–795 (PGLA…NEGS). Residues 819–829 (APGPPGAPGPV) show a composition bias toward pro residues. A compositionally biased stretch (low complexity) spans 843–862 (PAGPAGSAGPAGPRGPAGAP). The segment covering 865–876 (RGDKGESGEAGE) has biased composition (basic and acidic residues). The span at 889–925 (SGSSGEQGPAGAAGPAGPRGPAGSAGSPGKDGMSGLP) shows a compositional bias: low complexity. The 87-residue stretch at 932 to 1018 (GPRGGFDLGF…CTSHTGTWGK (87 aa)) folds into the Fibrillar collagen NC1 domain. Residues 948–959 (KAPDPFRDRDLE) are compositionally biased toward basic and acidic residues. The span at 963 to 973 (TLKSLSQQLEQ) shows a compositional bias: polar residues.

It belongs to the fibrillar collagen family.

Its subcellular location is the secreted. It localises to the extracellular space. The protein localises to the extracellular matrix. The polypeptide is Collagen, type I, alpha 1a (Epinephelus costae (Goldblotch grouper)).